Reading from the N-terminus, the 220-residue chain is Probable septum site-determining protein MinC (220 aa).

It belongs to the MinC family. In terms of assembly, interacts with MinD and FtsZ.

Cell division inhibitor that blocks the formation of polar Z ring septums. Rapidly oscillates between the poles of the cell to destabilize FtsZ filaments that have formed before they mature into polar Z rings. Prevents FtsZ polymerization. This Vibrio parahaemolyticus serotype O3:K6 (strain RIMD 2210633) protein is Probable septum site-determining protein MinC.